The sequence spans 833 residues: MTDVKKESDGPEPYSSSAFDFTLLPDYNNDFINEDDFAEFAKALAAPDHLSPSTEDLTAPQPETGKFSANNDWKPIHQRVRRRKKSKAPPRRGKDETREGFVYVLLKWPLLVVVLGWLLFLSIAYVFTRLYIYLYEHMVTWRGTRQKLRRQLQNASSYEEWIKCAQQLDTHLGSDDWKKNPSYSYYDSKTIRKVHEQLVKLRQRAESDETGKSTEKHVDGQPRAVEDLRALLEACIKNNFCGFENPRLYSETYYGTKDAVQSFIEEAEASLAFLLNSSQLDAENKRALFKHLGSNFGRTALCLSGGATFAYYHFGVAKALLDAGVLPEIITGTSGGALVAALLCTRTDEELKKVLVPALAGRITACHEDTWTWMKRWYATGARFDSVDWAKKCAWMTRGTPDCVVWSAVLASAAVPGILNPVVLMKKNRDGTLSPYSFGHKWKDGSLRTDIPLKALNLHFNVRFSIVSQVNPHINIFFFSSRGSVGRPVTHRRGRGWRGGFIGSATEQYLKLDLNKWLKVLRHLELLPRPLGQDWSEIWLQRFSGTITIWPKSIPSDFFYILTDPTPQRLARMIHVGQQSAFPKLKFIANRAKLEHLIQQGRRQYRPRGIREDIQAVLSEDDLQGLLKRTKSKSPSEEAIYPLSGSESSSSADFSRPGSPITLPLGFTFTRKNKKGLADLRTDPKALTDTPNSPSLSARLTGWWNTKSPRDSHPSTPKDPSRSLSPFTHHDRPNSMFELRPPKEVRDLQARTHGRPQHRNSDFLEEIRRRSSAFVEGEGSDDEGRAGRYRRGDVDAGAQDAEVYGEPAEFGDNEGDGEEVQSAVGLGLEGKGL.

Disordered stretches follow at residues 1-20 (MTDV…SAFD) and 49-71 (HLSP…SANN). Residues 108-128 (WPLLVVVLGWLLFLSIAYVFT) traverse the membrane as a helical segment. The region spanning 301–457 (LCLSGGATFA…RTDIPLKALN (157 aa)) is the PNPLA domain. Residues 332-336 (GTSGG) carry the GXSXG motif. Ser334 serves as the catalytic Nucleophile. The Proton acceptor role is filled by Asp444. Disordered regions lie at residues 630–657 (TKSK…FSRP) and 680–833 (LRTD…GKGL). Residues 644-655 (SGSESSSSADFS) are compositionally biased toward low complexity. Positions 689-707 (DTPNSPSLSARLTGWWNTK) are enriched in polar residues. 3 stretches are compositionally biased toward basic and acidic residues: residues 740–750 (RPPKEVRDLQA), 759–769 (RNSDFLEEIRR), and 782–794 (DEGR…RGDV). Over residues 809–819 (EFGDNEGDGEE) the composition is skewed to acidic residues.

Belongs to the PLPL family.

Its subcellular location is the membrane. In terms of biological role, probable lipid hydrolase. This is Patatin-like phospholipase domain-containing protein SNOG_00918 from Phaeosphaeria nodorum (strain SN15 / ATCC MYA-4574 / FGSC 10173) (Glume blotch fungus).